Consider the following 310-residue polypeptide: Signal peptidase I (310 aa).

The helical transmembrane segment at 5-25 (LSSFLLASSLITGTLWIINKI) threads the bilayer. The Cytoplasmic portion of the chain corresponds to 26-57 (LSHNLLDSKIPFNIKKSKIYYKSKQVVQTFAS). The helical transmembrane segment at 58–78 (FFPILIIVFIIRTFICEPFQI) threads the bilayer. The Extracellular portion of the chain corresponds to 79 to 310 (PSESMMPTLL…IQFDRIGNIY (232 aa)). Active-site residues include S82 and K137.

It belongs to the peptidase S26 family.

Its subcellular location is the cell membrane. The catalysed reaction is Cleavage of hydrophobic, N-terminal signal or leader sequences from secreted and periplasmic proteins.. This Buchnera aphidicola subsp. Baizongia pistaciae (strain Bp) protein is Signal peptidase I (lepB).